The following is a 682-amino-acid chain: Potassium-transporting ATPase ATP-binding subunit (682 aa).

4 consecutive transmembrane segments (helical) span residues 34-54 (PVMFVVWAGSVLTTLLTLAMV), 58-78 (IAGSALFTGVISLWLWFTVLF), 219-239 (IALTILLIALTIVFLLATATL), and 254-274 (VLVALLVCLIPTTIGGLLSAI). The active-site 4-aspartylphosphate intermediate is Asp307. ATP-binding positions include Asp344, Glu348, 377–384 (FTAQSRMS), and Lys395. Residues Asp518 and Asp522 each contribute to the Mg(2+) site. Helical transmembrane passes span 588 to 608 (FAIIPAAFAATYPQLNALNVM), 616 to 636 (AILSAVIFNALIIIFLIPLAL), and 662 to 682 (LVVPFIGIKVIDVLLTLLGLA).

Belongs to the cation transport ATPase (P-type) (TC 3.A.3) family. Type IA subfamily. As to quaternary structure, the system is composed of three essential subunits: KdpA, KdpB and KdpC.

The protein resides in the cell inner membrane. It catalyses the reaction K(+)(out) + ATP + H2O = K(+)(in) + ADP + phosphate + H(+). Functionally, part of the high-affinity ATP-driven potassium transport (or Kdp) system, which catalyzes the hydrolysis of ATP coupled with the electrogenic transport of potassium into the cytoplasm. This subunit is responsible for energy coupling to the transport system and for the release of the potassium ions to the cytoplasm. The polypeptide is Potassium-transporting ATPase ATP-binding subunit (Salmonella paratyphi A (strain ATCC 9150 / SARB42)).